The primary structure comprises 142 residues: Maximins y/Hv type 1 (142 aa).

The first 18 residues, 1-18 (MNFKYIVAVSFLIASGYA), serve as a signal peptide directing secretion. Residues 19 to 43 (RSEENDVQSLSQREVLEEESLREIR) constitute a propeptide that is removed on maturation. F68 bears the Phenylalanine amide mark. The propeptide occupies 72–121 (TAEDHEVMKRLEAVMRDLDSLDHPEEASERETRGFNQEEIANLFTKKEKR). Position 141 is an isoleucine amide (I141).

It belongs to the bombinin family. Expressed by the skin glands.

It localises to the secreted. Its function is as follows. Maximin-y shows antimicrobial activity against bacteria and against the fungus C.albicans. It has little hemolytic activity. Maximin-Hv shows antimicrobial activity against bacteria and against the fungus C.albicans. Shows strong hemolytic activity. The polypeptide is Maximins y/Hv type 1 (Bombina maxima (Giant fire-bellied toad)).